Reading from the N-terminus, the 256-residue chain is Cell division protein ZipA (256 aa).

Over 1-6 (MQYGRQ) the chain is Periplasmic. Residues 7–27 (ILICIGILTVIILLLYGLLNS) traverse the membrane as a helical segment. The Cytoplasmic segment spans residues 28–256 (YWDRTVTFCK…RHVLSANKST (229 aa)).

This sequence belongs to the ZipA family. In terms of assembly, interacts with FtsZ via their C-terminal domains.

Its subcellular location is the cell inner membrane. Its function is as follows. Essential cell division protein that stabilizes the FtsZ protofilaments by cross-linking them and that serves as a cytoplasmic membrane anchor for the Z ring. Also required for the recruitment to the septal ring of downstream cell division proteins. In Baumannia cicadellinicola subsp. Homalodisca coagulata, this protein is Cell division protein ZipA.